Here is a 391-residue protein sequence, read N- to C-terminus: Formate-dependent phosphoribosylglycinamide formyltransferase (391 aa).

Residues 18–19 (EL) and E78 contribute to the N(1)-(5-phospho-beta-D-ribosyl)glycinamide site. ATP-binding positions include R110, K151, 156–161 (SSGKGQ), 191–194 (EEFI), and E199. An ATP-grasp domain is found at 115–305 (DLASKDLKIK…EFELHLRAFL (191 aa)). Residues E264 and E276 each coordinate Mg(2+). Residues D283, K353, and 360 to 361 (RR) contribute to the N(1)-(5-phospho-beta-D-ribosyl)glycinamide site.

The protein belongs to the PurK/PurT family. Homodimer.

It catalyses the reaction N(1)-(5-phospho-beta-D-ribosyl)glycinamide + formate + ATP = N(2)-formyl-N(1)-(5-phospho-beta-D-ribosyl)glycinamide + ADP + phosphate + H(+). It functions in the pathway purine metabolism; IMP biosynthesis via de novo pathway; N(2)-formyl-N(1)-(5-phospho-D-ribosyl)glycinamide from N(1)-(5-phospho-D-ribosyl)glycinamide (formate route): step 1/1. In terms of biological role, involved in the de novo purine biosynthesis. Catalyzes the transfer of formate to 5-phospho-ribosyl-glycinamide (GAR), producing 5-phospho-ribosyl-N-formylglycinamide (FGAR). Formate is provided by PurU via hydrolysis of 10-formyl-tetrahydrofolate. In Prochlorococcus marinus (strain MIT 9301), this protein is Formate-dependent phosphoribosylglycinamide formyltransferase.